A 660-amino-acid polypeptide reads, in one-letter code: DNA mismatch repair protein MutL (660 aa).

The protein belongs to the DNA mismatch repair MutL/HexB family.

Functionally, this protein is involved in the repair of mismatches in DNA. It is required for dam-dependent methyl-directed DNA mismatch repair. May act as a 'molecular matchmaker', a protein that promotes the formation of a stable complex between two or more DNA-binding proteins in an ATP-dependent manner without itself being part of a final effector complex. This Streptococcus pyogenes serotype M12 (strain MGAS2096) protein is DNA mismatch repair protein MutL.